Consider the following 917-residue polypeptide: DNA repair endonuclease XPF (917 aa).

The tract at residues 1–457 (MEPGLSGERR…EVWVNVRKGD (457 aa)) is helicase-like. Leucine-zipper stretches follow at residues 233–254 (LNAC…DLSL) and 270–298 (LDPL…LQYL). Residue lysine 289 is modified to N6-acetyllysine. Over residues 454–479 (RKGDGPKRTTKSDKRPKAAPNKERAS) the composition is skewed to basic and acidic residues. 2 disordered regions span residues 454–524 (RKGD…SSPE) and 643–681 (VPEE…QNGT). The short motif at 487–492 (KRKKQE) is the Nuclear localization signal element. Positions 507–516 (EDKALEEDLC) are enriched in basic and acidic residues. Serine 522 is subject to Phosphoserine. The segment covering 643–653 (VPEEREGRDET) has biased composition (basic and acidic residues). A nuclease region spans residues 659 to 814 (RGSAALDAPT…PSPHATAELF (156 aa)). The 81-residue stretch at 684 to 764 (SIVVDMREFR…RPVLLIEFDP (81 aa)) folds into the ERCC4 domain. Serine 765 carries the phosphoserine modification. Residues 838–906 (TLPESDRYNP…QLHDFLHTAY (69 aa)) are hhH2, dimerization with ERCC1. Position 912 is an N6-acetyllysine (lysine 912).

Belongs to the XPF family. Heterodimer composed of ERCC1 and ERCC4/XPF. Interacts with SLX4/BTBD12; this interaction is direct and links the ERCC1-ERCC4/XPF complex to SLX4, which may coordinate the action of the structure-specific endonuclease during DNA repair. Mg(2+) serves as cofactor. Acetylation at Lys-912 by KAT5 promotes interaction with ERCC1 by disrupting a salt bridge between Asp-908 and Lys-912, thereby exposing a second binding site for ERCC1. Deacetylated by SIRT1.

The protein localises to the nucleus. The protein resides in the chromosome. Catalytic component of a structure-specific DNA repair endonuclease responsible for the 5-prime incision during DNA repair, and which is essential for nucleotide excision repair (NER) and interstrand cross-link (ICL) repair. In Mus musculus (Mouse), this protein is DNA repair endonuclease XPF.